The chain runs to 228 residues: Thermonuclease (228 aa).

Positions 1–23 (MTEYLLSAGICMAIVSILLIGMA) are cleaved as a signal peptide. A propeptide spanning residues 24–60 (ISNVSKEQYAKRFFFFATSCLVLTLVVASSLSSSANA) is cleaved from the precursor. Aspartate 100 is a binding site for Ca(2+). Arginine 114 is an active-site residue. Ca(2+) contacts are provided by aspartate 119 and threonine 120. Active-site residues include glutamate 122 and arginine 166.

Belongs to the thermonuclease family. Requires Ca(2+) as cofactor.

The protein localises to the secreted. It catalyses the reaction Endonucleolytic cleavage to nucleoside 3'-phosphates and 3'-phosphooligonucleotide end-products.. Enzyme that catalyzes the hydrolysis of both DNA and RNA at the 5' position of the phosphodiester bond. This chain is Thermonuclease (nuc), found in Staphylococcus aureus (strain MRSA252).